The primary structure comprises 358 residues: Probable branched-chain-amino-acid aminotransferase (358 aa).

Position 196 is an N6-(pyridoxal phosphate)lysine (Lys-196).

This sequence belongs to the class-IV pyridoxal-phosphate-dependent aminotransferase family. The cofactor is pyridoxal 5'-phosphate.

The enzyme catalyses L-leucine + 2-oxoglutarate = 4-methyl-2-oxopentanoate + L-glutamate. It carries out the reaction L-isoleucine + 2-oxoglutarate = (S)-3-methyl-2-oxopentanoate + L-glutamate. The catalysed reaction is L-valine + 2-oxoglutarate = 3-methyl-2-oxobutanoate + L-glutamate. Its pathway is amino-acid biosynthesis; L-isoleucine biosynthesis; L-isoleucine from 2-oxobutanoate: step 4/4. It participates in amino-acid biosynthesis; L-leucine biosynthesis; L-leucine from 3-methyl-2-oxobutanoate: step 4/4. The protein operates within amino-acid biosynthesis; L-valine biosynthesis; L-valine from pyruvate: step 4/4. Its function is as follows. Acts on leucine, isoleucine and valine. The polypeptide is Probable branched-chain-amino-acid aminotransferase (ilvE) (Staphylococcus epidermidis (strain ATCC 12228 / FDA PCI 1200)).